A 304-amino-acid chain; its full sequence is Polyisoprenyl-teichoic acid--peptidoglycan teichoic acid transferase TagU (304 aa).

At 1 to 4 (MKKK) the chain is on the cytoplasmic side. Residues 5–25 (ILFWILGIIGIMIIGGGVYAY) traverse the membrane as a helical; Signal-anchor for type II membrane protein segment. Residues 26 to 304 (NVYSSVSKTL…KLRAHLELTK (279 aa)) lie on the Extracellular side of the membrane.

It belongs to the LytR/CpsA/Psr (LCP) family.

Its subcellular location is the cell membrane. It participates in cell wall biogenesis. Functionally, may catalyze the final step in cell wall teichoic acid biosynthesis, the transfer of the anionic cell wall polymers (APs) from their lipid-linked precursor to the cell wall peptidoglycan (PG). This Bacillus mycoides (strain KBAB4) (Bacillus weihenstephanensis) protein is Polyisoprenyl-teichoic acid--peptidoglycan teichoic acid transferase TagU.